A 271-amino-acid polypeptide reads, in one-letter code: RxLR effector protein PITG_15679 (271 aa).

The signal sequence occupies residues 1 to 18 (MKVLQLIALTALVSSCVA). Residues 49–69 (RSLRRYDLEGLDSVNSNREER) carry the RxLR-dEER motif. Residues 212–271 (RLLSANVVMRLNDKGEKQILLISSSNPKKGDFLLPKGGWDKGEDVKKAALREVIEEGGVR) enclose the Nudix hydrolase domain. The Nudix box motif lies at 248–269 (GGWDKGEDVKKAALREVIEEGG).

It in the N-terminal section; belongs to the RxLR effector family. The protein in the C-terminal section; belongs to the Nudix hydrolase family.

The protein localises to the secreted. It localises to the host cytoplasm. The protein resides in the host nucleus. Its function is as follows. Effector that enhances P.infestans colonization of Nicotiana benthamiana leaves. This is RxLR effector protein PITG_15679 from Phytophthora infestans (strain T30-4) (Potato late blight agent).